We begin with the raw amino-acid sequence, 38 residues long: Histone H5 (38 aa).

Residues 1–15 (TESPIPVPAPAPAAK) are compositionally biased toward pro residues. The segment at 1–38 (TESPIPVPAPAPAAKPKPKRVSKRPASHPPYSDMIAAA) is disordered. Basic residues predominate over residues 16–26 (PKPKRVSKRPA).

It belongs to the histone H1/H5 family. As to expression, erythroid cells.

The protein resides in the nucleus. Its subcellular location is the chromosome. Histone H5 performs the same function as H1, being necessary for the condensation of nucleosome chains into higher order structures, and replaces histone H1 in certain cells. The sequence is that of Histone H5 from Columba livia (Rock dove).